A 287-amino-acid polypeptide reads, in one-letter code: Aquaporin PIP2-1 (287 aa).

Residue Met-1 is modified to N-acetylmethionine. The Cytoplasmic segment spans residues 2–39; that stretch reads AKDVEAVPGEGFQTRDYQDPPPAPFIDGAELKKWSFYR. Lys-3 carries the N6,N6-dimethyllysine; partial modification. Residues 40–60 form a helical membrane-spanning segment; it reads AVIAEFVATLLFLYITVLTVI. Residues 61–83 lie on the Extracellular side of the membrane; it reads GYKIQSDTDAGGVDCGGVGILGI. Residues 84 to 104 traverse the membrane as a helical segment; it reads AWAFGGMIFILVYCTAGISGG. Residues 105–125 lie on the Cytoplasmic side of the membrane; it reads HINPAVTFGLFLARKVSLPRA. The NPA 1 motif lies at 107 to 109; it reads NPA. The chain crosses the membrane as a helical span at residues 126 to 146; that stretch reads LLYIIAQCLGAICGVGFVKAF. At 147-167 the chain is on the extracellular side; the sequence is QSSYYTRYGGGANSLADGYST. Residues 168 to 188 traverse the membrane as a helical segment; the sequence is GTGLAAEIIGTFVLVYTVFSA. Over 189-201 the chain is Cytoplasmic; sequence TDPKRSARDSHVP. Residues 202-222 traverse the membrane as a helical segment; sequence VLAPLPIGFAVFMVHLATIPI. Residues 223–249 are Extracellular-facing; sequence TGTGINPARSFGAAVIYNKSKPWDDHW. The NPA 2 signature appears at 228–230; the sequence is NPA. Residues 250–270 form a helical membrane-spanning segment; that stretch reads IFWVGPFIGAAIAAFYHQFVL. Over 271–287 the chain is Cytoplasmic; it reads RASGSKSLGSFRSAANV. A phosphoserine mark is found at Ser-280 and Ser-283.

This sequence belongs to the MIP/aquaporin (TC 1.A.8) family. PIP (TC 1.A.8.11) subfamily. Ubiquitinated by RMA1, leading to proteasomal degradation. Post-translationally, the phosphorylation at Ser-280 and Ser-283 is altered by salt (NaCl) and hydrogen peroxide H(2)O(2) treatments. Phosphorylation of Ser-283 is required for plasma membrane targeting. As to expression, predominantly expressed in roots and green siliques. Also expressed at lower level above ground and in flower buds.

Its subcellular location is the cell membrane. Functionally, water channel required to facilitate the transport of water across cell membrane. Probably involved in root water uptake. Its function is impaired by Hg(2+). This chain is Aquaporin PIP2-1 (PIP2-1), found in Arabidopsis thaliana (Mouse-ear cress).